A 485-amino-acid chain; its full sequence is MTAPALSATAPAERCAHPGADLGAAVHAVGQTLAAGGLVPPDEAGTTARHLVRLAVRYGNSPFTPLEEARHDLGVDRDAFRRLLALFGQVPELRTAVETGPAGAYWKNTLLPLEQRGVFDAALARKPVFPYSVGLYPGPTCMFRCHFCVRVTGARYDPSALDAGNAMFRSVIDEIPAGNPSAMYFSGGLEPLTNPGLGSLAAHATDHGLRPTVYTNSFALTERTLERQPGLWGLHAIRTSLYGLNDEEYEQTTGKKAAFRRVRENLRRFQQLRAERESPINLGFAYIVLPGRASRLLDLVDFIADLNDAGQGRTIDFVNIREDYSGRDDGKLPQEERAELQEALNAFEERVRERTPGLHIDYGYALNSLRTGADAELLRIKPATMRPTAHPQVAVQVDLLGDVYLYREAGFPDLDGATRYIAGRVTPDTSLTEVVRDFVERGGEVAAVDGDEYFMDGFDQVVTARLNQLERDAADGWEEARGFLR.

[4Fe-4S] cluster contacts are provided by Cys141, Cys145, and Cys148.

Belongs to the radical SAM superfamily. DesII family. Monomer. Requires [4Fe-4S] cluster as cofactor.

The catalysed reaction is dTDP-4-amino-4,6-dideoxy-alpha-D-glucose + AH2 + S-adenosyl-L-methionine = dTDP-3-dehydro-4,6-dideoxy-alpha-D-glucose + 5'-deoxyadenosine + L-methionine + A + NH4(+) + H(+). Involved in the biosynthesis of dTDP-alpha-D-desosamine, a sugar found in several bacterial macrolide antibiotics. Catalyzes the SAM-dependent deamination of dTDP-4-amino-4,6-deoxyglucose (dTDP-viosamine) to yield dTDP-3-keto-4,6-deoxyglucose. It can also catalyze the oxidative dehydrogenation of the non-physiological substrate dTDP-D-quinovose to dTDP-3-keto-6-deoxy-d-glucose. It can also deaminate dTDP-3-amino-3,6-deoxyglucose. This Streptomyces venezuelae protein is dTDP-4-amino-4,6-dideoxy-D-glucose ammonia-lyase.